A 70-amino-acid chain; its full sequence is NAD(P)H-quinone oxidoreductase subunit O (70 aa).

Belongs to the complex I NdhO subunit family. As to quaternary structure, NDH-1 can be composed of about 15 different subunits; different subcomplexes with different compositions have been identified which probably have different functions.

The protein localises to the cellular thylakoid membrane. It catalyses the reaction a plastoquinone + NADH + (n+1) H(+)(in) = a plastoquinol + NAD(+) + n H(+)(out). The enzyme catalyses a plastoquinone + NADPH + (n+1) H(+)(in) = a plastoquinol + NADP(+) + n H(+)(out). Functionally, NDH-1 shuttles electrons from an unknown electron donor, via FMN and iron-sulfur (Fe-S) centers, to quinones in the respiratory and/or the photosynthetic chain. The immediate electron acceptor for the enzyme in this species is believed to be plastoquinone. Couples the redox reaction to proton translocation, and thus conserves the redox energy in a proton gradient. Cyanobacterial NDH-1 also plays a role in inorganic carbon-concentration. This is NAD(P)H-quinone oxidoreductase subunit O from Trichormus variabilis (strain ATCC 29413 / PCC 7937) (Anabaena variabilis).